We begin with the raw amino-acid sequence, 466 residues long: Phosphomethylpyrimidine synthase (466 aa).

Residues asparagine 80, methionine 109, tyrosine 139, histidine 175, serine 195–glycine 197, aspartate 236–arginine 239, and glutamate 275 each bind substrate. Residue histidine 279 participates in Zn(2+) binding. Tyrosine 302 is a binding site for substrate. Position 343 (histidine 343) interacts with Zn(2+). Residues cysteine 423, cysteine 426, and cysteine 431 each coordinate [4Fe-4S] cluster.

This sequence belongs to the ThiC family. [4Fe-4S] cluster is required as a cofactor.

The enzyme catalyses 5-amino-1-(5-phospho-beta-D-ribosyl)imidazole + S-adenosyl-L-methionine = 4-amino-2-methyl-5-(phosphooxymethyl)pyrimidine + CO + 5'-deoxyadenosine + formate + L-methionine + 3 H(+). Its pathway is cofactor biosynthesis; thiamine diphosphate biosynthesis. Catalyzes the synthesis of the hydroxymethylpyrimidine phosphate (HMP-P) moiety of thiamine from aminoimidazole ribotide (AIR) in a radical S-adenosyl-L-methionine (SAM)-dependent reaction. This Synechococcus sp. (strain CC9902) protein is Phosphomethylpyrimidine synthase.